Reading from the N-terminus, the 438-residue chain is Aflatoxin cluster transcriptional coactivator aflS (438 aa).

The HTH iclR-type domain maps to 65-134 (LALYNQLLAC…PSPGHVAHSV (70 aa)). A DNA-binding region (H-T-H motif) is located at residues 95-114 (FEDVADIAGVPECRLRRLVR).

In terms of assembly, interacts with aflR.

The protein localises to the nucleus. Transcription factor; part of the gene cluster that mediates the biosynthesis of aflatoxin, a polyketide-derived furanocoumarin which is part of the most toxic and carcinogenic compounds among the known mycotoxins. AflS exhibits no DNA-binding capability on its own, but forms a complex with the other aflatoxin cluster transcription factor aflR and acts as a modulator of aflR's DNA-binding by decreasing its DNA-binding affinity. The chain is Aflatoxin cluster transcriptional coactivator aflS from Aspergillus flavus (strain ATCC 200026 / FGSC A1120 / IAM 13836 / NRRL 3357 / JCM 12722 / SRRC 167).